The chain runs to 161 residues: Endoribonuclease YbeY (161 aa).

Residues H121, H125, and H131 each coordinate Zn(2+).

This sequence belongs to the endoribonuclease YbeY family. The cofactor is Zn(2+).

It is found in the cytoplasm. Its function is as follows. Single strand-specific metallo-endoribonuclease involved in late-stage 70S ribosome quality control and in maturation of the 3' terminus of the 16S rRNA. In Stenotrophomonas maltophilia (strain K279a), this protein is Endoribonuclease YbeY.